A 439-amino-acid polypeptide reads, in one-letter code: C4-dicarboxylate transport protein (439 aa).

The next 9 membrane-spanning stretches (helical) occupy residues 9–29 (HLYF…YYLP), 45–65 (MIKM…IAGM), 80–100 (LYFE…INII), 150–170 (GEIL…SAMG), 186–206 (AFFG…FGAM), 221–241 (LGML…VVLG), 291–311 (VVGL…SIYL), 334–354 (ILGV…SGFV), and 357–377 (AATF…ILGI).

The protein belongs to the dicarboxylate/amino acid:cation symporter (DAACS) (TC 2.A.23) family.

It is found in the cell inner membrane. In terms of biological role, responsible for the transport of dicarboxylates such as succinate, fumarate, and malate from the periplasm across the membrane. The chain is C4-dicarboxylate transport protein from Geobacter sp. (strain M21).